The primary structure comprises 590 residues: Aspartate--tRNA(Asp/Asn) ligase (590 aa).

Glu175 contacts L-aspartate. Positions Gln199–Lys202 are aspartate. Positions 221 and 452 each coordinate L-aspartate. Residue Arg221–Glu223 participates in ATP binding. Position 485 (Glu485) interacts with ATP. Arg492 contacts L-aspartate. Gly537–Arg540 is a binding site for ATP.

Belongs to the class-II aminoacyl-tRNA synthetase family. Type 1 subfamily. Homodimer.

Its subcellular location is the cytoplasm. The catalysed reaction is tRNA(Asx) + L-aspartate + ATP = L-aspartyl-tRNA(Asx) + AMP + diphosphate. Its function is as follows. Aspartyl-tRNA synthetase with relaxed tRNA specificity since it is able to aspartylate not only its cognate tRNA(Asp) but also tRNA(Asn). Reaction proceeds in two steps: L-aspartate is first activated by ATP to form Asp-AMP and then transferred to the acceptor end of tRNA(Asp/Asn). This is Aspartate--tRNA(Asp/Asn) ligase from Dinoroseobacter shibae (strain DSM 16493 / NCIMB 14021 / DFL 12).